A 217-amino-acid polypeptide reads, in one-letter code: Probable transaldolase (217 aa).

The Schiff-base intermediate with substrate role is filled by K83.

Belongs to the transaldolase family. Type 3B subfamily.

The protein localises to the cytoplasm. It catalyses the reaction D-sedoheptulose 7-phosphate + D-glyceraldehyde 3-phosphate = D-erythrose 4-phosphate + beta-D-fructose 6-phosphate. It functions in the pathway carbohydrate degradation; pentose phosphate pathway; D-glyceraldehyde 3-phosphate and beta-D-fructose 6-phosphate from D-ribose 5-phosphate and D-xylulose 5-phosphate (non-oxidative stage): step 2/3. Its function is as follows. Transaldolase is important for the balance of metabolites in the pentose-phosphate pathway. This chain is Probable transaldolase, found in Pseudothermotoga lettingae (strain ATCC BAA-301 / DSM 14385 / NBRC 107922 / TMO) (Thermotoga lettingae).